We begin with the raw amino-acid sequence, 351 residues long: CCN family member 3 (351 aa).

Residues 1-24 (METGGGQGLPVLLLLLLLLRPCEV) form the signal peptide. The IGFBP N-terminal domain maps to 27 to 101 (REAACPRPCG…GGGAGICMVL (75 aa)). Intrachain disulfides connect Cys-31-Cys-57, Cys-35-Cys-59, Cys-39-Cys-60, Cys-46-Cys-63, Cys-71-Cys-85, and Cys-77-Cys-98. The VWFC domain occupies 104–170 (DNCVFDGMIY…GECCEKWVCD (67 aa)). Residues 201-246 (NCIEQTTEWSACSKSCGMGFSTRVTNRNQQCEMVKQTRLCMMRPCE) form the TSP type-1 domain. Cystine bridges form between Cys-258-Cys-295, Cys-275-Cys-309, Cys-286-Cys-325, Cys-289-Cys-327, and Cys-294-Cys-331. Residues 258 to 332 (CIQTKKSMKA…NTCVCHGNCP (75 aa)) form the CTCK domain. An N-linked (GlcNAc...) asparagine glycan is attached at Asn-274.

The protein belongs to the CCN family. In terms of tissue distribution, brain and heart, and at a lower level in muscle and intestine, in the embryo. Lung and less so in brain and spleen, in adult chicken.

It localises to the secreted. The protein resides in the cytoplasm. Its subcellular location is the cell junction. It is found in the gap junction. Functionally, immediate-early protein likely to play a role in cell growth regulation. Its overexpression is associated with tumorigenesis and expression of a N-terminal-truncated version of CCN3 gene in chicken embryonic fibroblasts (CEF) is sufficient to induce the transformation of CEF in vitro. The protein is CCN family member 3 (CCN3) of Gallus gallus (Chicken).